Reading from the N-terminus, the 247-residue chain is 3,4-dihydroxy-2-butanone 4-phosphate synthase (247 aa).

D-ribulose 5-phosphate contacts are provided by residues 38–39 (RE), Asp-43, 179–183 (RMGQT), and Glu-203. Residue Glu-39 coordinates Mg(2+).

The protein belongs to the DHBP synthase family. Homodimer. Mg(2+) serves as cofactor. Requires Mn(2+) as cofactor.

It carries out the reaction D-ribulose 5-phosphate = (2S)-2-hydroxy-3-oxobutyl phosphate + formate + H(+). It participates in cofactor biosynthesis; riboflavin biosynthesis; 2-hydroxy-3-oxobutyl phosphate from D-ribulose 5-phosphate: step 1/1. Its function is as follows. Catalyzes the conversion of D-ribulose 5-phosphate to formate and 3,4-dihydroxy-2-butanone 4-phosphate. The chain is 3,4-dihydroxy-2-butanone 4-phosphate synthase from Methanosarcina acetivorans (strain ATCC 35395 / DSM 2834 / JCM 12185 / C2A).